The sequence spans 264 residues: Undecaprenyl-diphosphatase (264 aa).

The next 8 helical transmembrane spans lie at 7–27, 45–65, 86–106, 109–129, 145–165, 186–206, 215–235, and 244–264; these read IVIP…PVSS, TKIL…LFFY, IHVL…YNKI, LFNP…LIIA, INLV…YPGF, VNFS…LDLI, LNIP…FLLI, and KVSL…IYFI.

It belongs to the UppP family.

Its subcellular location is the cell membrane. The catalysed reaction is di-trans,octa-cis-undecaprenyl diphosphate + H2O = di-trans,octa-cis-undecaprenyl phosphate + phosphate + H(+). Catalyzes the dephosphorylation of undecaprenyl diphosphate (UPP). Confers resistance to bacitracin. The protein is Undecaprenyl-diphosphatase of Buchnera aphidicola subsp. Schizaphis graminum (strain Sg).